The sequence spans 373 residues: Flagellar P-ring protein 1 (373 aa).

The first 24 residues, 1-24 (MRGISRLYWSLVLICFAFAPIVEA), serve as a signal peptide directing secretion.

This sequence belongs to the FlgI family. In terms of assembly, the basal body constitutes a major portion of the flagellar organelle and consists of four rings (L,P,S, and M) mounted on a central rod.

It localises to the periplasm. The protein localises to the bacterial flagellum basal body. In terms of biological role, assembles around the rod to form the L-ring and probably protects the motor/basal body from shearing forces during rotation. The protein is Flagellar P-ring protein 1 of Hahella chejuensis (strain KCTC 2396).